The following is a 202-amino-acid chain: Ras-related protein RABD2b (202 aa).

GTP-binding positions include 15–23 (GDSGVGKSC), 33–40 (YLDSYIST), 63–67 (DTAGQ), 121–124 (NKND), and 151–153 (SAK). An Effector region motif is present at residues 37–45 (YISTIGVDF). A disordered region spans residues 174-202 (ASQPAGGAKPPTVQIRGQPVNQQSGCCSS). Residues 192–202 (PVNQQSGCCSS) show a composition bias toward polar residues. S-geranylgeranyl cysteine attachment occurs at residues Cys-199 and Cys-200.

Belongs to the small GTPase superfamily. Rab family.

It localises to the golgi apparatus. Its subcellular location is the trans-Golgi network membrane. The protein localises to the golgi apparatus membrane. Protein transport. Regulator of membrane traffic from the Golgi apparatus towards the endoplasmic reticulum (ER). The protein is Ras-related protein RABD2b (RABD2B) of Arabidopsis thaliana (Mouse-ear cress).